The following is a 459-amino-acid chain: WD repeat-containing protein 41 (459 aa).

6 WD repeats span residues 40-79 (KAHH…KLLE), 82-128 (GHTQ…QVQR), 131-168 (CFQS…LCKT), 220-258 (DHQD…MQAY), 321-359 (AHDS…QLAA), and 403-441 (GHSS…SGLR).

As to quaternary structure, component of the C9orf72-SMCR8 complex, at least composed of C9orf72, SMCR8 and WDR41. The complex is formed of two protomers, each individually consisting of one molecule each of C9orf72, SMCR8 and WDR41. The protomers homodimerize via an interaction between C9orf72 (via C-terminus) and SMCR8 (via N-terminus). Within each protomer SMCR8 (via DENN domain) acts as a bridging protein between WDR41 (via C-terminus and N-terminus) and C9orf72 (via C-terminus). The C9orf72-SMCR8 complex associates with the ULK1/ATG1 kinase complex.

Its subcellular location is the cytoplasm. In terms of biological role, non-catalytic component of the C9orf72-SMCR8 complex, a complex that has guanine nucleotide exchange factor (GEF) activity and regulates autophagy. The C9orf72-SMCR8 complex promotes the exchange of GDP to GTP, converting inactive GDP-bound RAB8A and RAB39B into their active GTP-bound form, thereby promoting autophagosome maturation. As part of the C9orf72-SMCR8 complex, stimulates RAB8A and RAB11A GTPase activity in vitro, however WDR42 is shown not be an essential complex component for this function. The C9orf72-SMCR8 complex also acts as a negative regulator of autophagy initiation by interacting with the ULK1/ATG1 kinase complex and inhibiting its protein kinase activity. The chain is WD repeat-containing protein 41 from Homo sapiens (Human).